We begin with the raw amino-acid sequence, 379 residues long: Homoserine O-acetyltransferase (379 aa).

Residues 52-356 form the AB hydrolase-1 domain; that stretch reads NVVVVLHALT…VYGHDGFLVE (305 aa). The Nucleophile role is filled by S157. R227 provides a ligand contact to substrate. Residues D320 and H350 contribute to the active site. D351 is a substrate binding site.

It belongs to the AB hydrolase superfamily. MetX family. In terms of assembly, homodimer.

Its subcellular location is the cytoplasm. The catalysed reaction is L-homoserine + acetyl-CoA = O-acetyl-L-homoserine + CoA. It functions in the pathway amino-acid biosynthesis; L-methionine biosynthesis via de novo pathway; O-acetyl-L-homoserine from L-homoserine: step 1/1. Its function is as follows. Transfers an acetyl group from acetyl-CoA to L-homoserine, forming acetyl-L-homoserine. This Mycobacterium tuberculosis (strain CDC 1551 / Oshkosh) protein is Homoserine O-acetyltransferase.